A 1358-amino-acid chain; its full sequence is Mediator of RNA polymerase II transcription subunit 12 (1358 aa).

Belongs to the Mediator complex subunit 12 family. As to quaternary structure, component of the SRB8-11 complex, which itself associates with the Mediator complex.

It is found in the nucleus. Functionally, component of the SRB8-11 complex. The SRB8-11 complex is a regulatory module of the Mediator complex which is itself involved in regulation of basal and activated RNA polymerase II-dependent transcription. The SRB8-11 complex may be involved in the transcriptional repression of a subset of genes regulated by Mediator. It may inhibit the association of the Mediator complex with RNA polymerase II to form the holoenzyme complex. The sequence is that of Mediator of RNA polymerase II transcription subunit 12 (SRB8) from Candida glabrata (strain ATCC 2001 / BCRC 20586 / JCM 3761 / NBRC 0622 / NRRL Y-65 / CBS 138) (Yeast).